The chain runs to 467 residues: Glutamate--tRNA ligase (467 aa).

A 'HIGH' region motif is present at residues 9-19 (PSPTGFLHIGG). The short motif at 250–254 (KLSKR) is the 'KMSKS' region element. ATP is bound at residue Lys253.

Belongs to the class-I aminoacyl-tRNA synthetase family. Glutamate--tRNA ligase type 1 subfamily. In terms of assembly, monomer.

The protein localises to the cytoplasm. It catalyses the reaction tRNA(Glu) + L-glutamate + ATP = L-glutamyl-tRNA(Glu) + AMP + diphosphate. Its function is as follows. Catalyzes the attachment of glutamate to tRNA(Glu) in a two-step reaction: glutamate is first activated by ATP to form Glu-AMP and then transferred to the acceptor end of tRNA(Glu). This is Glutamate--tRNA ligase from Mesomycoplasma hyopneumoniae (strain 232) (Mycoplasma hyopneumoniae).